We begin with the raw amino-acid sequence, 459 residues long: MHSPPRDQAAIMLWKLVENVKYEDIYEDRHDGVPSHSSRLSQLGSVSQGPYSSAPPLSHTPSSDFQPPYFPPPYQPLPYHQSQDPYSHVNDPYSLNPLHQPQQHPWGQRQRQEVGSEAGSLLPQPRAALPQLSGLDPRRDYHSVRRPDVLLHSAHHGLDAGMGDSLSLHGLGHPGMEDVQSVEDANNSGMNLLDQSVIKKVPVPPKSVTSLMMNKDGFLGGMSVNTGEVFCSVPGRLSLLSSTSKYKVTVGEVQRRLSPPECLNASLLGGVLRRAKSKNGGRSLRERLEKIGLNLPAGRRKAANVTLLTSLVEGEAVHLARDFGYICETEFPAKAVSEYLNRQHTDPSDLHSRKNMLLATKQLCKEFTDLLAQDRTPIGNSRPSPILEPGIQSCLTHFSLITHGFGAPAICAALTALQNYLTEALKGMDKMFLNNTTNRHTSGEGPGSKTGDKEEKHRK.

Residue lysine 21 forms a Glycyl lysine isopeptide (Lys-Gly) (interchain with G-Cter in SUMO) linkage. The segment at 30–139 is disordered; the sequence is HDGVPSHSSR…PQLSGLDPRR (110 aa). Residues 35-51 are compositionally biased toward polar residues; sequence SHSSRLSQLGSVSQGPY. Residues 121 to 132 show a composition bias toward low complexity; sequence LLPQPRAALPQL. At serine 258 the chain carries Phosphoserine; by PKA. An H-S-H (helix-span-helix), dimerization region spans residues 299–429; that stretch reads RRKAANVTLL…YLTEALKGMD (131 aa). The interval 435–459 is disordered; the sequence is NTTNRHTSGEGPGSKTGDKEEKHRK. Positions 450-459 are enriched in basic and acidic residues; it reads TGDKEEKHRK.

It belongs to the AP-2 family. In terms of assembly, binds DNA as a dimer. Can form homodimers or heterodimers with other AP-2 family members. Interacts with CITED4. Interacts with UBE2I. Interacts with KCTD1; this interaction represses transcription activation. Interacts with CITED2 (via C-terminus); the interaction stimulates TFAP2B-transcriptional activity. In terms of processing, sumoylated. Sumoylated on Lys-21; which inhibits transcriptional activity. As to expression, localizes to neurons in areas of the cerebral cortex, cerebellum and hypothalamus (at protein level).

Its subcellular location is the nucleus. Functionally, sequence-specific DNA-binding protein that interacts with inducible viral and cellular enhancer elements to regulate transcription of selected genes. AP-2 factors bind to the consensus sequence 5'-GCCNNNGGC-3' and activate genes involved in a large spectrum of important biological functions including proper eye, face, body wall, limb and neural tube development. They also suppress a number of genes including MCAM/MUC18, C/EBP alpha and MYC. AP-2-beta appears to be required for normal face and limb development and for proper terminal differentiation and function of renal tubular epithelia. This Mus musculus (Mouse) protein is Transcription factor AP-2-beta (Tfap2b).